The chain runs to 117 residues: Protein YchN (117 aa).

It to M.jannaschii MJ0989. Homohexamer. The hexamer is formed by a dimer of trimers.

This Escherichia coli O157:H7 protein is Protein YchN (ychN).